The sequence spans 201 residues: MLLPWLNEELIEAGCDEAGRGCLAGAVYAAAVILPKDFENELLNDSKQLSEKQRYALREVIERDAVAWAVGIVSPEEIDKINILNASFLAMHRAVDRLKTRPQHLLIDGNRFKKYPDIPHTTVIKGDGKYLSIAAASILAKTYRDDYMNRLHQEFPCYDWEHNKGYPTKKHRAAIAGHGTTPYHRMTFNLLGDGQLELFSK.

One can recognise an RNase H type-2 domain in the interval 10 to 200 (LIEAGCDEAG…LGDGQLELFS (191 aa)). Residues D16, E17, and D108 each coordinate a divalent metal cation.

Belongs to the RNase HII family. It depends on Mn(2+) as a cofactor. Mg(2+) serves as cofactor.

Its subcellular location is the cytoplasm. The catalysed reaction is Endonucleolytic cleavage to 5'-phosphomonoester.. Its function is as follows. Endonuclease that specifically degrades the RNA of RNA-DNA hybrids. The sequence is that of Ribonuclease HII from Bacteroides fragilis (strain YCH46).